The sequence spans 122 residues: MAAEEGVVIACHNKDEFDAQMTKAKEAGKVVIIDFTASWCGPCRFIAPVFAEYAKKFPGAVFLKVDVDELKEVAEKYNVEAMPTFLFIKDGAEADKVVGARKDDLQNTIVKHVGATAASASA.

Residues 2 to 118 enclose the Thioredoxin domain; it reads AAEEGVVIAC…IVKHVGATAA (117 aa). Cysteine 40 and cysteine 43 are oxidised to a cystine.

Its subcellular location is the cytoplasm. Its function is as follows. Participates in various redox reactions through the reversible oxidation of the active center dithiol to a disulfide. The H form is known to activate a number of cytosolic enzymes. The chain is Thioredoxin H-type (TRXH) from Oryza sativa subsp. indica (Rice).